The primary structure comprises 312 residues: Polyamine aminopropyltransferase (312 aa).

One can recognise a PABS domain in the interval 7–247 (FFWAQEYFTP…GPLGFALAAQ (241 aa)). Q36 serves as a coordination point for S-methyl-5'-thioadenosine. Spermidine-binding residues include H67 and E95. S-methyl-5'-thioadenosine is bound by residues D115 and 147 to 148 (DA). D165 functions as the Proton acceptor in the catalytic mechanism. P174 provides a ligand contact to S-methyl-5'-thioadenosine.

Belongs to the spermidine/spermine synthase family. In terms of assembly, homodimer or homotetramer.

The protein localises to the cytoplasm. It catalyses the reaction S-adenosyl 3-(methylsulfanyl)propylamine + putrescine = S-methyl-5'-thioadenosine + spermidine + H(+). It participates in amine and polyamine biosynthesis; spermidine biosynthesis; spermidine from putrescine: step 1/1. In terms of biological role, catalyzes the irreversible transfer of a propylamine group from the amino donor S-adenosylmethioninamine (decarboxy-AdoMet) to putrescine (1,4-diaminobutane) to yield spermidine. The protein is Polyamine aminopropyltransferase of Synechococcus sp. (strain JA-3-3Ab) (Cyanobacteria bacterium Yellowstone A-Prime).